We begin with the raw amino-acid sequence, 127 residues long: Protein ApaG (127 aa).

An ApaG domain is found at 3–127 (KDKRYAFSVK…FQLNMPRVLH (125 aa)).

In Methylobacillus flagellatus (strain ATCC 51484 / DSM 6875 / VKM B-1610 / KT), this protein is Protein ApaG.